A 500-amino-acid chain; its full sequence is Glycerol kinase (500 aa).

Threonine 13 is an ADP binding site. ATP-binding residues include threonine 13, threonine 14, and serine 15. Threonine 13 contacts sn-glycerol 3-phosphate. Residue arginine 17 participates in ADP binding. The sn-glycerol 3-phosphate site is built by arginine 83, glutamate 84, tyrosine 135, and aspartate 245. Residues arginine 83, glutamate 84, tyrosine 135, aspartate 245, and glutamine 246 each contribute to the glycerol site. ADP is bound by residues threonine 267 and glycine 310. Residues threonine 267, glycine 310, glutamine 314, and glycine 411 each coordinate ATP. ADP-binding residues include glycine 411 and asparagine 415.

This sequence belongs to the FGGY kinase family. Homotetramer and homodimer (in equilibrium).

It catalyses the reaction glycerol + ATP = sn-glycerol 3-phosphate + ADP + H(+). The protein operates within polyol metabolism; glycerol degradation via glycerol kinase pathway; sn-glycerol 3-phosphate from glycerol: step 1/1. Activated by phosphorylation and inhibited by fructose 1,6-bisphosphate (FBP). Functionally, key enzyme in the regulation of glycerol uptake and metabolism. Catalyzes the phosphorylation of glycerol to yield sn-glycerol 3-phosphate. This Lactobacillus acidophilus (strain ATCC 700396 / NCK56 / N2 / NCFM) protein is Glycerol kinase.